The chain runs to 198 residues: MILIIDNYDSFTYNLVQYVGVLTDVAVVKNDDDSLGNMAEKADALIFSPGPGWPADAGKMETLIQQFAGQKPILGICLGFQAIVEVFGGKLRLAHQVMHGKNSQVRQTSGNLIFNHLPSKFLVMRYHSIVMDEAVALPDFAITAVATDDGEIMAIENEKEQIYGLQFHPESIGTLDGMTMIENFVNQVNENKESSNEK.

One can recognise a Glutamine amidotransferase type-1 domain in the interval 1–194 (MILIIDNYDS…VNQVNENKES (194 aa)). 50-52 (GPG) provides a ligand contact to L-glutamine. Catalysis depends on C77, which acts as the Nucleophile; for GATase activity. Residues Q81 and 128 to 129 (SI) contribute to the L-glutamine site. Catalysis depends on for GATase activity residues H168 and E170.

In terms of assembly, heterotetramer consisting of two non-identical subunits: a beta subunit (TrpG) and a large alpha subunit (TrpE).

The enzyme catalyses chorismate + L-glutamine = anthranilate + pyruvate + L-glutamate + H(+). It participates in amino-acid biosynthesis; L-tryptophan biosynthesis; L-tryptophan from chorismate: step 1/5. Its function is as follows. Part of a heterotetrameric complex that catalyzes the two-step biosynthesis of anthranilate, an intermediate in the biosynthesis of L-tryptophan. In the first step, the glutamine-binding beta subunit (TrpG) of anthranilate synthase (AS) provides the glutamine amidotransferase activity which generates ammonia as a substrate that, along with chorismate, is used in the second step, catalyzed by the large alpha subunit of AS (TrpE) to produce anthranilate. In the absence of TrpG, TrpE can synthesize anthranilate directly from chorismate and high concentrations of ammonia. The chain is Anthranilate synthase component 2 (trpG) from Lactococcus lactis subsp. lactis (strain IL1403) (Streptococcus lactis).